The chain runs to 538 residues: MSYKPSAKTEVRRNRYKVSVDADEGRRRREDNMVEIRKNKREENLQKKRREGFNPSMASQPGQDFSSSLPTETRLENIQQMIAGVMSEDRDLQLEATASFRRLLSIERNPPINEVVQSGVVPHIVQFLSRDDFTQLQFEAAWALTNIASGTSENTRVIIDSGAVPLFVKLLSSASEEVREQAVWALGNVAGDSPKCRDHVLSCEAMMSLLAQFHEHSKLSMLRNATWTLSNFCRGKPQPAFEQTKAALPALERLLHSTDEEVLTDASWALSYLSDGTNEKIQTVIDAGVIPRLVQLLAHPSPSVLIPALRTIGNIVTGDDIQTQAVISSQALPGLLNLLKNTYKKSIKKEACWTISNITAGNTSQIQEVFQAGIIRPLINLLEIGEFEIKKEAVWAISNATSGGNHDQIKFLVSQGCIRPLCDLLPCPDPRVVTVTLEGLENILKVGEAEKNLGNTGNDNLYAQMIEDADGLDKIENLQSHDNNEIYEKAVKILESYWAADDEEEDIGGVDAPENVQSSGFQFGNQSGNAPTGGFNFG.

The IBB domain maps to 1-58 (MSYKPSAKTEVRRNRYKVSVDADEGRRRREDNMVEIRKNKREENLQKKRREGFNPSMA). Positions 1-69 (MSYKPSAKTE…QPGQDFSSSL (69 aa)) are disordered. The segment covering 7-46 (AKTEVRRNRYKVSVDADEGRRRREDNMVEIRKNKREENLQ) has biased composition (basic and acidic residues). The span at 56–69 (SMASQPGQDFSSSL) shows a compositional bias: polar residues. ARM repeat units lie at residues 109–149 (NPPI…NIAS), 152–191 (SENT…NVAG), 194–234 (PKCR…NFCR), 236–275 (KPQP…YLSD), 278–317 (NEKI…NIVT), 320–360 (DIQT…NITA), 363–402 (TSQI…NATS), and 406–445 (HDQI…NILK).

Belongs to the importin alpha family. Forms a complex with importin subunit beta-1.

The protein localises to the nucleus envelope. Its function is as follows. Binds to conventional NLS motifs and mediates nuclear protein import across the nuclear envelope. Acts as a cellular receptor for the nuclear import of the virD2 protein of Agrobacterium, but is not essential for Agrobacterium-mediated root transformation. This is Importin subunit alpha-6 from Arabidopsis thaliana (Mouse-ear cress).